Here is a 690-residue protein sequence, read N- to C-terminus: Calpain-9 (690 aa).

Residues 1–24 form a disordered region; it reads MPYLHRSLRPQPQPVPRDARTVHS. Residues 42–337 form the Calpain catalytic domain; that stretch reads LFEDADFPAS…FDKVEICNLT (296 aa). Leu-81, Gly-83, and Asp-88 together coordinate Ca(2+). Residue Cys-97 is part of the active site. Glu-167 is a Ca(2+) binding site. Active-site residues include His-254 and Asn-278. Residues Glu-284, Asp-291, Leu-312, Asp-314, and Glu-316 each contribute to the Ca(2+) site. The tract at residues 338-521 is domain III; that stretch reads PDALEDNTLH…PQEEETEEER (184 aa). A domain IV region spans residues 522-690; sequence QFRALFRRIA…NEFINLTMNI (169 aa). EF-hand domains follow at residues 534–552, 561–589, and 591–626; these read DMEVSAEELEYVLNAVLQK, LSLLSCRNIISLMDTSGNGKMEFEEFRVF, and DKLRYWMDLFLQFDVDKSGTMSSYELRTALKAAGFQ. Residues Asp-574, Ser-576, Asn-578, Lys-580, Glu-585, Asp-604, Asp-606, Ser-608, Thr-610, and Glu-615 each coordinate Ca(2+).

This sequence belongs to the peptidase C2 family. In terms of tissue distribution, predominantly expressed in stomach and small intestine, although low levels of expression in other organs.

Functionally, calcium-regulated non-lysosomal thiol-protease. The polypeptide is Calpain-9 (Capn9) (Rattus norvegicus (Rat)).